The following is a 152-amino-acid chain: Endoribonuclease YbeY (152 aa).

3 residues coordinate Zn(2+): His118, His122, and His128.

Belongs to the endoribonuclease YbeY family. It depends on Zn(2+) as a cofactor.

The protein localises to the cytoplasm. In terms of biological role, single strand-specific metallo-endoribonuclease involved in late-stage 70S ribosome quality control and in maturation of the 3' terminus of the 16S rRNA. This Pelotomaculum thermopropionicum (strain DSM 13744 / JCM 10971 / SI) protein is Endoribonuclease YbeY.